The primary structure comprises 307 residues: MTVAPEGRKLLRLEVRNADTPIERKPPWIRVRARMGPEYTELKSLVRREGLHTVCEEAGCPNIFECWEDREATFLIGGDQCTRRCDFCQIDTGKPAELDRDEPRRVADSVRTMGLRYATVTGVARDDLPDGGAWLYAETVRAIKELNPSTGVELLIPDFNGRPDRLAEVFGSRPEVLAHNVETVPRIFKRIRPAFTYRRSLDVLTAAREAGLVTKSNLILGLGETPDEVRTALADLRGAGCDIITITQYLRPSARHHPVERWVKPEEFVEFARHAEELGFSGVLAGPLVRSSYRAGRLYRQAARARA.

Positions 55, 60, 66, 81, 85, 88, and 292 each coordinate [4Fe-4S] cluster. One can recognise a Radical SAM core domain in the interval 67–281 (WEDREATFLI…ARHAEELGFS (215 aa)).

This sequence belongs to the radical SAM superfamily. Lipoyl synthase family. The cofactor is [4Fe-4S] cluster.

Its subcellular location is the cytoplasm. The catalysed reaction is [[Fe-S] cluster scaffold protein carrying a second [4Fe-4S](2+) cluster] + N(6)-octanoyl-L-lysyl-[protein] + 2 oxidized [2Fe-2S]-[ferredoxin] + 2 S-adenosyl-L-methionine + 4 H(+) = [[Fe-S] cluster scaffold protein] + N(6)-[(R)-dihydrolipoyl]-L-lysyl-[protein] + 4 Fe(3+) + 2 hydrogen sulfide + 2 5'-deoxyadenosine + 2 L-methionine + 2 reduced [2Fe-2S]-[ferredoxin]. It functions in the pathway protein modification; protein lipoylation via endogenous pathway; protein N(6)-(lipoyl)lysine from octanoyl-[acyl-carrier-protein]: step 2/2. Functionally, catalyzes the radical-mediated insertion of two sulfur atoms into the C-6 and C-8 positions of the octanoyl moiety bound to the lipoyl domains of lipoate-dependent enzymes, thereby converting the octanoylated domains into lipoylated derivatives. The protein is Lipoyl synthase of Mycobacterium avium (strain 104).